We begin with the raw amino-acid sequence, 243 residues long: tRNA pseudouridine synthase A (243 aa).

Aspartate 53 acts as the Nucleophile in catalysis. Tyrosine 111 contributes to the substrate binding site.

This sequence belongs to the tRNA pseudouridine synthase TruA family. Homodimer.

The enzyme catalyses uridine(38/39/40) in tRNA = pseudouridine(38/39/40) in tRNA. In terms of biological role, formation of pseudouridine at positions 38, 39 and 40 in the anticodon stem and loop of transfer RNAs. The chain is tRNA pseudouridine synthase A from Chlorobium phaeovibrioides (strain DSM 265 / 1930) (Prosthecochloris vibrioformis (strain DSM 265)).